Here is a 411-residue protein sequence, read N- to C-terminus: Meiotically up-regulated gene 147 protein (411 aa).

Disordered regions lie at residues 1–52, 102–137, and 156–191; these read MLAQ…FENK, EREE…ELAD, and HQHE…HYES. The segment covering 33–43 has biased composition (polar residues); that stretch reads TQNESNLQQSE. The segment covering 156–172 has biased composition (basic and acidic residues); it reads HQHEDEFSSSNKDKGFT.

The protein localises to the cytoplasm. Its subcellular location is the nucleus. Has a role in meiosis. The chain is Meiotically up-regulated gene 147 protein (mug147) from Schizosaccharomyces pombe (strain 972 / ATCC 24843) (Fission yeast).